A 126-amino-acid chain; its full sequence is Large ribosomal subunit protein bL17 (126 aa).

The protein belongs to the bacterial ribosomal protein bL17 family. As to quaternary structure, part of the 50S ribosomal subunit. Contacts protein L32.

This is Large ribosomal subunit protein bL17 from Xylella fastidiosa (strain 9a5c).